The following is a 395-amino-acid chain: Chorismate synthase (395 aa).

Residues arginine 40 and arginine 46 each coordinate NADP(+). Residues 134-136 (RAS), 256-257 (QA), glycine 301, 316-320 (KPIST), and arginine 342 contribute to the FMN site.

It belongs to the chorismate synthase family. As to quaternary structure, homotetramer. FMNH2 is required as a cofactor.

The enzyme catalyses 5-O-(1-carboxyvinyl)-3-phosphoshikimate = chorismate + phosphate. The protein operates within metabolic intermediate biosynthesis; chorismate biosynthesis; chorismate from D-erythrose 4-phosphate and phosphoenolpyruvate: step 7/7. Catalyzes the anti-1,4-elimination of the C-3 phosphate and the C-6 proR hydrogen from 5-enolpyruvylshikimate-3-phosphate (EPSP) to yield chorismate, which is the branch point compound that serves as the starting substrate for the three terminal pathways of aromatic amino acid biosynthesis. This reaction introduces a second double bond into the aromatic ring system. This is Chorismate synthase from Beutenbergia cavernae (strain ATCC BAA-8 / DSM 12333 / CCUG 43141 / JCM 11478 / NBRC 16432 / NCIMB 13614 / HKI 0122).